The sequence spans 339 residues: DnaJ homolog subfamily C member 22 (339 aa).

The 47-residue stretch at 4 to 50 (GLLMTYVLWALGGPVGLHHLYLGRDSHALLWMLTLGGGGLGWLWEFW) folds into the TM2 domain. Transmembrane regions (helical) follow at residues 5-25 (LLMT…HLYL), 30-50 (HALL…WEFW), 81-101 (FASQ…SLSS), 105-125 (FYIV…AAVG), 135-155 (LGAA…ILPI), 185-205 (VGLA…YNTA), and 218-238 (FLSW…VLLL). Residues 277–339 (LAHQVLGVPE…LSQPKKPRAS (63 aa)) form the J domain.

It localises to the membrane. Its function is as follows. May function as a co-chaperone. The polypeptide is DnaJ homolog subfamily C member 22 (Dnajc22) (Mus musculus (Mouse)).